A 37-amino-acid chain; its full sequence is Large ribosomal subunit protein bL36c (37 aa).

It belongs to the bacterial ribosomal protein bL36 family.

Its subcellular location is the plastid. It is found in the chloroplast. This is Large ribosomal subunit protein bL36c from Liriodendron tulipifera (Tuliptree).